The primary structure comprises 500 residues: NAD(P)H-quinone oxidoreductase chain 4, chloroplastic (500 aa).

A run of 14 helical transmembrane segments spans residues 4-24 (FPWL…IFFL), 37-57 (IFIC…HFQL), 87-107 (IGPI…AWPV), 113-130 (LFHF…GSFS), 134-154 (LLLF…LLSM), 167-187 (FILY…GIGL), 208-228 (ALEI…SPII), 242-262 (HYST…YGLV), 272-292 (AHSI…IYAA), 305-325 (IAYS…SITD), 330-350 (GAIL…FLAG), 386-406 (LALP…GIIT), 416-436 (ILIT…SLSM), and 462-482 (LFVL…PDFV).

Belongs to the complex I subunit 4 family.

It is found in the plastid. The protein resides in the chloroplast thylakoid membrane. It catalyses the reaction a plastoquinone + NADH + (n+1) H(+)(in) = a plastoquinol + NAD(+) + n H(+)(out). It carries out the reaction a plastoquinone + NADPH + (n+1) H(+)(in) = a plastoquinol + NADP(+) + n H(+)(out). This is NAD(P)H-quinone oxidoreductase chain 4, chloroplastic from Vitis vinifera (Grape).